Here is a 163-residue protein sequence, read N- to C-terminus: Large ribosomal subunit protein uL15 (163 aa).

Belongs to the universal ribosomal protein uL15 family. As to quaternary structure, part of the 50S ribosomal subunit.

Binds to the 23S rRNA. This chain is Large ribosomal subunit protein uL15, found in Orientia tsutsugamushi (strain Ikeda) (Rickettsia tsutsugamushi).